The chain runs to 239 residues: Small ribosomal subunit protein uS2 (239 aa).

The protein belongs to the universal ribosomal protein uS2 family.

In Francisella philomiragia subsp. philomiragia (strain ATCC 25017 / CCUG 19701 / FSC 153 / O#319-036), this protein is Small ribosomal subunit protein uS2.